Here is a 598-residue protein sequence, read N- to C-terminus: (-)-endo-fenchol synthase, chloroplastic (598 aa).

The transit peptide at 1–34 (MWSTISISMNVAILKKPLNFLHNSNNKASNPRCV) directs the protein to the chloroplast. Mg(2+) contacts are provided by Asp-351, Asp-355, Asp-495, Thr-499, and Glu-503. Residues 351-355 (DDVYD) carry the DDXXD motif motif.

This sequence belongs to the terpene synthase family. Mg(2+) serves as cofactor. Requires Mn(2+) as cofactor.

It localises to the plastid. It is found in the chloroplast. It carries out the reaction (2E)-geranyl diphosphate + H2O = (1S,2S,4R)-endo-fenchol + diphosphate. It functions in the pathway secondary metabolite biosynthesis; terpenoid biosynthesis. Monoterpene synthase that catalyzes the formation of fenchol from geranyl diphosphate. The polypeptide is (-)-endo-fenchol synthase, chloroplastic (FES) (Ocimum basilicum (Sweet basil)).